We begin with the raw amino-acid sequence, 603 residues long: Sulfoacetaldehyde acetyltransferase (603 aa).

It belongs to the TPP enzyme family. The cofactor is Mg(2+). Requires thiamine diphosphate as cofactor.

The enzyme catalyses acetyl phosphate + sulfite + H(+) = sulfoacetaldehyde + phosphate. Functionally, catalyzes the degradation of sulfoacetaldehyde into sulfite and acetyl phosphate. Involved in sulfolactate degradation. This is Sulfoacetaldehyde acetyltransferase from Roseovarius nubinhibens (strain ATCC BAA-591 / DSM 15170 / ISM).